A 553-amino-acid polypeptide reads, in one-letter code: Rhodopsin kinase GRK7 (553 aa).

The residue at position 36 (Ser-36) is a Phosphoserine; by PKA. Residues 56-176 form the RGS domain; that stretch reads FHSLCEQQPI…VTSAFYDKFL (121 aa). The 264-residue stretch at 191 to 454 folds into the Protein kinase domain; sequence FTEFRVLGKG…SDDPRKHHFF (264 aa). ATP-binding positions include 197–205 and Lys-220; that span reads LGKGGFGEV. Asp-316 acts as the Proton acceptor in catalysis. The region spanning 455–520 is the AGC-kinase C-terminal domain; the sequence is KTINFPRLEA…GAVPIAWQEE (66 aa). Residue Cys-550 is modified to Cysteine methyl ester. Residue Cys-550 is the site of S-geranylgeranyl cysteine attachment. The propeptide at 551–553 is removed in mature form; it reads LLL.

Belongs to the protein kinase superfamily. AGC Ser/Thr protein kinase family. GPRK subfamily. As to quaternary structure, interacts (when prenylated) with PDE6D; this promotes release from membranes. Post-translationally, autophosphorylated in vitro at Ser-490. Phosphorylation at Ser-36 is regulated by light and activated by cAMP. In terms of tissue distribution, retinal cones, outer and inner segments.

The protein localises to the membrane. It carries out the reaction L-threonyl-[rhodopsin] + ATP = O-phospho-L-threonyl-[rhodopsin] + ADP + H(+). The catalysed reaction is L-seryl-[rhodopsin] + ATP = O-phospho-L-seryl-[rhodopsin] + ADP + H(+). With respect to regulation, inhibited by phosphorylation of Ser-36. Functionally, retina-specific kinase involved in the shutoff of the photoresponse and adaptation to changing light conditions via cone opsin phosphorylation, including rhodopsin (RHO). The protein is Rhodopsin kinase GRK7 (GRK7) of Homo sapiens (Human).